The following is a 484-amino-acid chain: tRNA sulfurtransferase (484 aa).

Residues 56-158 (NCLKKALSKV…GNRAYFYTEV (103 aa)) form the THUMP domain. Residues 176–177 (LV), K257, G279, and Q288 contribute to the ATP site. A disulfide bridge links C336 with C444. The 84-residue stretch at 396-479 (APEGAVIVDL…TRNAVPPSSQ (84 aa)) folds into the Rhodanese domain. C444 serves as the catalytic Cysteine persulfide intermediate.

Belongs to the ThiI family.

The protein resides in the cytoplasm. It catalyses the reaction [ThiI sulfur-carrier protein]-S-sulfanyl-L-cysteine + a uridine in tRNA + 2 reduced [2Fe-2S]-[ferredoxin] + ATP + H(+) = [ThiI sulfur-carrier protein]-L-cysteine + a 4-thiouridine in tRNA + 2 oxidized [2Fe-2S]-[ferredoxin] + AMP + diphosphate. The catalysed reaction is [ThiS sulfur-carrier protein]-C-terminal Gly-Gly-AMP + S-sulfanyl-L-cysteinyl-[cysteine desulfurase] + AH2 = [ThiS sulfur-carrier protein]-C-terminal-Gly-aminoethanethioate + L-cysteinyl-[cysteine desulfurase] + A + AMP + 2 H(+). It participates in cofactor biosynthesis; thiamine diphosphate biosynthesis. Catalyzes the ATP-dependent transfer of a sulfur to tRNA to produce 4-thiouridine in position 8 of tRNAs, which functions as a near-UV photosensor. Also catalyzes the transfer of sulfur to the sulfur carrier protein ThiS, forming ThiS-thiocarboxylate. This is a step in the synthesis of thiazole, in the thiamine biosynthesis pathway. The sulfur is donated as persulfide by IscS. The sequence is that of tRNA sulfurtransferase from Pyrobaculum aerophilum (strain ATCC 51768 / DSM 7523 / JCM 9630 / CIP 104966 / NBRC 100827 / IM2).